Reading from the N-terminus, the 122-residue chain is Fluoride-specific ion channel FluC 2 (122 aa).

Helical transmembrane passes span 1–21, 33–53, 62–82, and 102–122; these read MAWL…FLLS, PLGT…LLAL, VTLA…TFTY, and GSIL…GSLF. Residues Gly72 and Thr75 each coordinate Na(+).

The protein belongs to the fluoride channel Fluc/FEX (TC 1.A.43) family.

Its subcellular location is the cell membrane. It catalyses the reaction fluoride(in) = fluoride(out). With respect to regulation, na(+) is not transported, but it plays an essential structural role and its presence is essential for fluoride channel function. In terms of biological role, fluoride-specific ion channel. Important for reducing fluoride concentration in the cell, thus reducing its toxicity. This is Fluoride-specific ion channel FluC 2 from Moorella thermoacetica (strain ATCC 39073 / JCM 9320).